The following is a 344-amino-acid chain: Anthranilate phosphoribosyltransferase (344 aa).

5-phospho-alpha-D-ribose 1-diphosphate is bound by residues Gly84, Gly87–Asp88, Thr92, Asn94–Thr97, Lys112–Ser120, and Ser124. Gly84 serves as a coordination point for anthranilate. A Mg(2+)-binding site is contributed by Ser96. Asn115 contributes to the anthranilate binding site. Arg170 lines the anthranilate pocket. 2 residues coordinate Mg(2+): Asp229 and Glu230.

The protein belongs to the anthranilate phosphoribosyltransferase family. In terms of assembly, homodimer. It depends on Mg(2+) as a cofactor.

It catalyses the reaction N-(5-phospho-beta-D-ribosyl)anthranilate + diphosphate = 5-phospho-alpha-D-ribose 1-diphosphate + anthranilate. Its pathway is amino-acid biosynthesis; L-tryptophan biosynthesis; L-tryptophan from chorismate: step 2/5. Catalyzes the transfer of the phosphoribosyl group of 5-phosphorylribose-1-pyrophosphate (PRPP) to anthranilate to yield N-(5'-phosphoribosyl)-anthranilate (PRA). This is Anthranilate phosphoribosyltransferase from Xylella fastidiosa (strain 9a5c).